The primary structure comprises 340 residues: MTDQLITLIWIIIKIVLILVPLLVAVAFITLAERKVIGYMQSRVGPNRVGFRGLAQPIADIFKLLLKEVIIPTASSRYLYLIAPILSLVPALAAWAVIPFAQGWVLANVNAGLLFLFAMTSLGVYGILVAGWASNSKYAFFGALRSAAQVVSYEIPMGFALVGVLLAAGTMNLQGIVLRQSGGLWHWFWLPLLPLFVTYWITAVAETNRAPFDVAEGESEIVAGFHVEYAGVTFALFFLAEYANMVLVSAIATVIFLGGWLSPFQGIPGLESLFAWVPGIVWFVLKLSLFIFTYFWMRATFPRYRYDQIMRLCWKVLIPVTLVWIIILALAIEFHWTHWL.

Transmembrane regions (helical) follow at residues 9 to 29, 81 to 101, 113 to 133, 158 to 178, 184 to 204, 221 to 240, 245 to 264, 273 to 293, and 316 to 336; these read IWIIIKIVLILVPLLVAVAFI, LIAPILSLVPALAAWAVIPFA, LLFLFAMTSLGVYGILVAGWA, GFALVGVLLAAGTMNLQGIVL, LWHWFWLPLLPLFVTYWITAV, IVAGFHVEYAGVTFALFFLA, MVLVSAIATVIFLGGWLSPF, LFAWVPGIVWFVLKLSLFIFT, and VLIPVTLVWIIILALAIEFHW.

This sequence belongs to the complex I subunit 1 family. In terms of assembly, NDH-1 is composed of 14 different subunits. Subunits NuoA, H, J, K, L, M, N constitute the membrane sector of the complex.

The protein resides in the cell inner membrane. The catalysed reaction is a quinone + NADH + 5 H(+)(in) = a quinol + NAD(+) + 4 H(+)(out). NDH-1 shuttles electrons from NADH, via FMN and iron-sulfur (Fe-S) centers, to quinones in the respiratory chain. The immediate electron acceptor for the enzyme in this species is believed to be ubiquinone. Couples the redox reaction to proton translocation (for every two electrons transferred, four hydrogen ions are translocated across the cytoplasmic membrane), and thus conserves the redox energy in a proton gradient. This subunit may bind ubiquinone. This chain is NADH-quinone oxidoreductase subunit H, found in Coxiella burnetii (strain CbuK_Q154) (Coxiella burnetii (strain Q154)).